The chain runs to 120 residues: Holo-[acyl-carrier-protein] synthase (120 aa).

Positions 8 and 58 each coordinate Mg(2+).

Belongs to the P-Pant transferase superfamily. AcpS family. Mg(2+) is required as a cofactor.

It is found in the cytoplasm. It carries out the reaction apo-[ACP] + CoA = holo-[ACP] + adenosine 3',5'-bisphosphate + H(+). Transfers the 4'-phosphopantetheine moiety from coenzyme A to a Ser of acyl-carrier-protein. The chain is Holo-[acyl-carrier-protein] synthase from Anoxybacillus flavithermus (strain DSM 21510 / WK1).